An 82-amino-acid chain; its full sequence is ATP synthase subunit c, chloroplastic (82 aa).

Transmembrane regions (helical) follow at residues 3–23 (PLIS…ASIG) and 57–77 (FAFM…LLFA).

Belongs to the ATPase C chain family. As to quaternary structure, F-type ATPases have 2 components, F(1) - the catalytic core - and F(0) - the membrane proton channel. F(1) has five subunits: alpha(3), beta(3), gamma(1), delta(1), epsilon(1). F(0) has four main subunits: a(1), b(1), b'(1) and c(10-14). The alpha and beta chains form an alternating ring which encloses part of the gamma chain. F(1) is attached to F(0) by a central stalk formed by the gamma and epsilon chains, while a peripheral stalk is formed by the delta, b and b' chains.

It localises to the plastid. It is found in the chloroplast thylakoid membrane. Functionally, f(1)F(0) ATP synthase produces ATP from ADP in the presence of a proton or sodium gradient. F-type ATPases consist of two structural domains, F(1) containing the extramembraneous catalytic core and F(0) containing the membrane proton channel, linked together by a central stalk and a peripheral stalk. During catalysis, ATP synthesis in the catalytic domain of F(1) is coupled via a rotary mechanism of the central stalk subunits to proton translocation. Key component of the F(0) channel; it plays a direct role in translocation across the membrane. A homomeric c-ring of between 10-14 subunits forms the central stalk rotor element with the F(1) delta and epsilon subunits. This chain is ATP synthase subunit c, chloroplastic, found in Mesostigma viride (Green alga).